We begin with the raw amino-acid sequence, 310 residues long: Vomeronasal type-1 receptor 47 (310 aa).

The Extracellular portion of the chain corresponds to methionine 1–threonine 16. Residues phenylalanine 17–isoleucine 37 traverse the membrane as a helical segment. Residues lysine 38–aspartate 49 lie on the Cytoplasmic side of the membrane. Residues leucine 50–alanine 70 traverse the membrane as a helical segment. The Extracellular portion of the chain corresponds to threonine 71 to leucine 91. Residues cysteine 85 and cysteine 172 are joined by a disulfide bond. The helical transmembrane segment at tyrosine 92–leucine 114 threads the bilayer. At serine 115 to asparagine 131 the chain is on the cytoplasmic side. A helical membrane pass occupies residues isoleucine 132–isoleucine 152. The Extracellular segment spans residues serine 153–glutamate 193. N-linked (GlcNAc...) asparagine glycosylation is present at asparagine 159. The helical transmembrane segment at valine 194–histidine 214 threads the bilayer. Residues arginine 215–glutamine 238 lie on the Cytoplasmic side of the membrane. The helical transmembrane segment at threonine 239–serine 259 threads the bilayer. Topologically, residues serine 260–threonine 269 are extracellular. Residues cysteine 270 to methionine 290 traverse the membrane as a helical segment. Residues serine 291 to methionine 310 lie on the Cytoplasmic side of the membrane.

The protein belongs to the G-protein coupled receptor 1 family.

It is found in the cell membrane. Its function is as follows. Putative pheromone receptor implicated in the regulation of social and reproductive behavior. In Mus musculus (Mouse), this protein is Vomeronasal type-1 receptor 47 (Vmn1r47).